A 224-amino-acid chain; its full sequence is Endonuclease NucS (224 aa).

Belongs to the NucS endonuclease family.

Its subcellular location is the cytoplasm. Functionally, cleaves both 3' and 5' ssDNA extremities of branched DNA structures. The chain is Endonuclease NucS from Rhodococcus jostii (strain RHA1).